We begin with the raw amino-acid sequence, 1418 residues long: Alpha-latrotoxin-Lhe1a (1418 aa).

The first 20 residues, 1–20, serve as a signal peptide directing secretion; sequence MIFVGETMERANHSLVRLRR. Residues 17-20 form a furin-like endopeptidase recognition region region; sequence RLRR. Positions 238–257 are helix H8 is the probable transmembrane region of the tetrameric pore inserted in the target cell membrane; that stretch reads VLYALLYGTQTYISVMFFLL. A disulfide bond links C413 and C1066. ANK repeat units follow at residues 458–489, 490–521, 525–554, 559–589, 593–622, 626–656, 660–690, 695–723, 729–758, 762–791, 795–824, 828–857, 862–891, 895–924, 928–957, 971–1003, 1004–1033, 1035–1064, 1068–1097, 1101–1131, 1137–1166, and 1170–1199; these read LYNA…ATFD, QGRT…ELNQ, KGYT…SINS, FLQT…NINE, DGFT…DVNA, KGLT…DINA, NNMT…NANV, GLLS…NVNV, GGIT…NIEQ, EKYT…NFEA, SGAT…NWRD, NGQM…TVLD, NSDT…DINT, NGHA…NVYI, NGMN…KFEW, EECA…GNFN, ICGP…SVDG, KTDT…KVNH, NGMT…DFRR, RGAT…DINI, DKET…DVTI, and YDKT…KFRR. The tract at residues 1026-1032 is 4C4.1 epitope; the sequence is EEVLSVD. The segment at 1196 to 1199 is furin-like endopeptidase recognition region; sequence KFRR. A propeptide spanning residues 1200–1418 is cleaved from the precursor; sequence EYKSSYGEHS…SEKKIQKISI (219 aa).

It belongs to the cationic peptide 01 (latrotoxin) family. 03 (alpha-latrotoxin) subfamily. In terms of assembly, homotetramer in membranes. Processed by furin-like proteases at both the N- and C-termini. As to expression, expressed in venom gland, cephalothorax, and abdomen tissues from both males and females.

The protein resides in the secreted. The protein localises to the target cell membrane. Presynaptic neurotoxin that causes massive release of neurotransmitters from vertebrate (but not invertebrate) nerve terminals and endocrine cells via a complex mechanism involving activation of receptor(s) and toxin insertion into the plasma membrane with subsequent pore formation. Binds to neurexin-1-alpha (NRXN1) in a calcium dependent manner, adhesion G protein-coupled receptor L1 (ADGRL1, also termed latrophilin-1 and calcium-independent receptor of latrotoxin (CIRL)), and receptor-type tyrosine-protein phosphatase S (PTPRS), also termed PTP sigma. NRXN1 and PTPRS are suggested to provide a platform for binding and subsequent pore formation events. In contrast, binding to ADGRL1 does not involve oligomerization and channel formation, but direct downstream stimulation of the synaptic fusion machinery. This chain is Alpha-latrotoxin-Lhe1a, found in Latrodectus hesperus (Western black widow spider).